Consider the following 344-residue polypeptide: N-acetyl-gamma-glutamyl-phosphate reductase (344 aa).

Residue C150 is part of the active site.

It belongs to the NAGSA dehydrogenase family. Type 1 subfamily.

It localises to the cytoplasm. It catalyses the reaction N-acetyl-L-glutamate 5-semialdehyde + phosphate + NADP(+) = N-acetyl-L-glutamyl 5-phosphate + NADPH + H(+). It participates in amino-acid biosynthesis; L-arginine biosynthesis; N(2)-acetyl-L-ornithine from L-glutamate: step 3/4. Functionally, catalyzes the NADPH-dependent reduction of N-acetyl-5-glutamyl phosphate to yield N-acetyl-L-glutamate 5-semialdehyde. The chain is N-acetyl-gamma-glutamyl-phosphate reductase from Azotobacter vinelandii (strain DJ / ATCC BAA-1303).